A 197-amino-acid chain; its full sequence is MLERIKDSFTESIQTKIDASEALPESIAKAAEMMVNCLLGGNKILACGNGGSAGDAQHFSAELLNRYEIERPPLPAIALSCDTSTITAIANDYSYDEIFSKQIMALGQPGDILLAISTSGNSGNVIKAMEAALSRDMTIVSLTGKDGGAMAGLLSVNDVEIRVPSNVTARIQEVHLLAIHCLCDNIDRTLFPQDEQA.

The SIS domain maps to 34-196 (MVNCLLGGNK…DRTLFPQDEQ (163 aa)). Substrate is bound at residue 49–51 (NGG). Zn(2+)-binding residues include His-58 and Glu-62. Substrate contacts are provided by residues Glu-62, 91 to 92 (ND), 117 to 119 (STS), Ser-122, and Gln-172. Zn(2+)-binding residues include Gln-172 and His-180.

This sequence belongs to the SIS family. GmhA subfamily. As to quaternary structure, homotetramer. Zn(2+) serves as cofactor.

It localises to the cytoplasm. It catalyses the reaction 2 D-sedoheptulose 7-phosphate = D-glycero-alpha-D-manno-heptose 7-phosphate + D-glycero-beta-D-manno-heptose 7-phosphate. The protein operates within carbohydrate biosynthesis; D-glycero-D-manno-heptose 7-phosphate biosynthesis; D-glycero-alpha-D-manno-heptose 7-phosphate and D-glycero-beta-D-manno-heptose 7-phosphate from sedoheptulose 7-phosphate: step 1/1. Its function is as follows. Catalyzes the isomerization of sedoheptulose 7-phosphate in D-glycero-D-manno-heptose 7-phosphate. The sequence is that of Phosphoheptose isomerase from Shewanella pealeana (strain ATCC 700345 / ANG-SQ1).